Here is a 441-residue protein sequence, read N- to C-terminus: Peroxisome proliferator-activated receptor delta (441 aa).

Residues 1-22 show a composition bias toward acidic residues; that stretch reads MEQPQEEAPEVREEEEKEEVAE. The interval 1 to 54 is disordered; it reads MEQPQEEAPEVREEEEKEEVAEAEGAPELNGGPQHALPSSSYTDLSRSSSPPSL. Low complexity predominate over residues 37-54; that stretch reads LPSSSYTDLSRSSSPPSL. The segment at residues 71-145 is a DNA-binding region (nuclear receptor); it reads NMECRVCGDK…LGMSHNAIRF (75 aa). 2 NR C4-type zinc fingers span residues 74–94 and 111–133; these read CRVC…CEGC and CERS…FQKC. Residues 211 to 439 form the NR LBD domain; sequence FVIHDIETLW…HPLLQEIYKD (229 aa).

It belongs to the nuclear hormone receptor family. NR1 subfamily. In terms of assembly, heterodimer with the retinoid X receptor. Interacts (via domain NR LBD) with CRY1 and CRY2 in a ligand-dependent manner. 'Lys-48'-linked polyubiquitinated; leading to proteasomal degradation. Deubiquitinated and stabilized by OTUD3. Ubiquitous with maximal levels in placenta and skeletal muscle.

The protein resides in the nucleus. Its function is as follows. Ligand-activated transcription factor key mediator of energy metabolism in adipose tissues. Receptor that binds peroxisome proliferators such as hypolipidemic drugs and fatty acids. Has a preference for poly-unsaturated fatty acids, such as gamma-linoleic acid and eicosapentanoic acid. Once activated by a ligand, the receptor binds to promoter elements of target genes. Regulates the peroxisomal beta-oxidation pathway of fatty acids. Functions as transcription activator for the acyl-CoA oxidase gene. Decreases expression of NPC1L1 once activated by a ligand. The chain is Peroxisome proliferator-activated receptor delta from Homo sapiens (Human).